We begin with the raw amino-acid sequence, 449 residues long: Serine--tRNA ligase (449 aa).

Residue 256 to 258 (TSE) participates in L-serine binding. Residue 287-289 (RAE) participates in ATP binding. Glu-310 lines the L-serine pocket. 374–377 (EISS) is an ATP binding site. Ser-410 lines the L-serine pocket.

The protein belongs to the class-II aminoacyl-tRNA synthetase family. Type-1 seryl-tRNA synthetase subfamily. As to quaternary structure, homodimer. The tRNA molecule binds across the dimer.

The protein resides in the cytoplasm. The enzyme catalyses tRNA(Ser) + L-serine + ATP = L-seryl-tRNA(Ser) + AMP + diphosphate + H(+). It catalyses the reaction tRNA(Sec) + L-serine + ATP = L-seryl-tRNA(Sec) + AMP + diphosphate + H(+). The protein operates within aminoacyl-tRNA biosynthesis; selenocysteinyl-tRNA(Sec) biosynthesis; L-seryl-tRNA(Sec) from L-serine and tRNA(Sec): step 1/1. Functionally, catalyzes the attachment of serine to tRNA(Ser). Is also able to aminoacylate tRNA(Sec) with serine, to form the misacylated tRNA L-seryl-tRNA(Sec), which will be further converted into selenocysteinyl-tRNA(Sec). The polypeptide is Serine--tRNA ligase (Xanthomonas oryzae pv. oryzae (strain MAFF 311018)).